A 353-amino-acid chain; its full sequence is Rhodopsin (353 aa).

Over 1 to 36 the chain is Extracellular; that stretch reads MNGTEGPYFYIPMVNTTGIVRSPYEYPQYYLVNPAA. Residues N2 and N15 are each glycosylated (N-linked (GlcNAc...) asparagine). Residues 37 to 61 form a helical membrane-spanning segment; sequence YAALGAYMFLLILLGFPINFLTLYV. At 62-73 the chain is on the cytoplasmic side; sequence TIEHKKLRTPLN. Residues 74–96 traverse the membrane as a helical segment; it reads YILLNLAVANLFMVFGGFTTTMY. Residues 97-110 are Extracellular-facing; that stretch reads TSMHGYFVLGRLGC. Cysteines 110 and 187 form a disulfide. A helical membrane pass occupies residues 111 to 133; the sequence is NLEGFFATLGGEIALWSLVVLAV. The 'Ionic lock' involved in activated form stabilization signature appears at 134 to 136; it reads ERW. The Cytoplasmic portion of the chain corresponds to 134–152; the sequence is ERWMVVCKPISNFRFGENH. The chain crosses the membrane as a helical span at residues 153–173; the sequence is AIMGLAFTWVMASACAVPPLV. Topologically, residues 174–202 are extracellular; sequence GWSRYIPEGMQCSCGIDYYTRAEGFNNES. N200 carries N-linked (GlcNAc...) asparagine glycosylation. The chain crosses the membrane as a helical span at residues 203-224; that stretch reads FVIYMFVCHFLIPLVVVFFCYG. The Cytoplasmic portion of the chain corresponds to 225-252; that stretch reads RLLCAVKEAAAAQQESETTQRAEREVSR. Residues 253-274 traverse the membrane as a helical segment; it reads MVVIMVVAFLICWCPYAGVAWY. At 275 to 286 the chain is on the extracellular side; the sequence is IFTHQGSEFGPL. The chain crosses the membrane as a helical span at residues 287-308; it reads FMTFPAFFAKSSSIYNPMIYIC. At K296 the chain carries N6-(retinylidene)lysine. Residues 309-353 lie on the Cytoplasmic side of the membrane; the sequence is MNKQFRHCMITTLCCGKNPFEEEEGASTTSKTEASSVSSSSVSPA. 2 S-palmitoyl cysteine lipidation sites follow: C322 and C323. The segment at 330–353 is disordered; the sequence is EEEGASTTSKTEASSVSSSSVSPA. The segment covering 334–353 has biased composition (low complexity); sequence ASTTSKTEASSVSSSSVSPA.

It belongs to the G-protein coupled receptor 1 family. Opsin subfamily. Phosphorylated on some or all of the serine and threonine residues present in the C-terminal region. Post-translationally, contains one covalently linked retinal chromophore.

It is found in the membrane. The protein localises to the cell projection. Its subcellular location is the cilium. It localises to the photoreceptor outer segment. Functionally, photoreceptor required for image-forming vision at low light intensity. While most salt water fish species use retinal as chromophore, most freshwater fish use 3-dehydroretinal, or a mixture of retinal and 3-dehydroretinal. Light-induced isomerization of 11-cis to all-trans retinal triggers a conformational change that activates signaling via G-proteins. Subsequent receptor phosphorylation mediates displacement of the bound G-protein alpha subunit by arrestin and terminates signaling. In Mugil cephalus (Flathead mullet), this protein is Rhodopsin (rho).